The chain runs to 1499 residues: Pleiotropic ABC efflux transporter of multiple drugs CDR1 (1499 aa).

Basic and acidic residues predominate over residues 1-11; that stretch reads MSLASDKKDAD. The disordered stretch occupies residues 1 to 29; the sequence is MSLASDKKDADVASTTTTAQDDDNLSTYH. N-linked (GlcNAc...) asparagine glycosylation is found at Asn24, Asn96, and Asn99. Residues 146 to 399 form the ABC transporter 1 domain; it reads VYNTVVPSTA…FQKMGYVSPE (254 aa). Ser307 carries the phosphoserine modification. A glycan (N-linked (GlcNAc...) asparagine) is linked at Asn323. A Phosphoserine modification is found at Ser484. A helical membrane pass occupies residues 510–530; it reads GVTLFMVIGNSSMAFILGSMF. N-linked (GlcNAc...) asparagine glycosylation occurs at Asn537. A run of 5 helical transmembrane segments spans residues 548-568, 597-617, 622-642, 654-674, and 763-783; these read AMFF…FSLF, VPAK…LVNF, GVFF…SHLF, AAMV…GFAI, and GFGI…ILCE. Asn813 is a glycosylation site (N-linked (GlcNAc...) asparagine). Residues 857–1099 enclose the ABC transporter 2 domain; sequence FHWRNLCYDV…TMIDYFESHG (243 aa). 893–900 is an ATP binding site; the sequence is GASGAGKT. The N-linked (GlcNAc...) asparagine glycan is linked to Asn1159. 3 consecutive transmembrane segments (helical) span residues 1193 to 1213, 1228 to 1248, and 1278 to 1298; these read YLWS…FTFF, AVFM…PSFV, and IPWN…AIGF. Asn1301 is a glycosylation site (N-linked (GlcNAc...) asparagine). Transmembrane regions (helical) follow at residues 1314 to 1334 and 1342 to 1362; these read LFWL…LFCI and AAAN…GVLV. N-linked (GlcNAc...) asparagine glycosylation is present at Asn1412. A helical transmembrane segment spans residues 1466–1486; it reads WGIFICYIAFNYIAGIFLYWL.

This sequence belongs to the ABC transporter superfamily. Post-translationally, phosphorylated at Ser-307 and Ser-484. Ser-307 and Ser-484 are dephosphorylated on glucose depletion and independently rephosphorylated during glucose exposure or under stress.

The protein resides in the cell membrane. Inhibited by clorgyline. Inhibited by RC21v3, a 4-methoxy-2,3,6-trimethylbenzenesulphonyl derivative of the D-octapeptide D-FFKWQRRR, via the interaction with the ectodomain. FK506, enniatin, milbemycin alpha-11, and milbemycin beta-9 also inhibit CDR1 activity. Inhibited by milbemycin A3/A4 oxim derivatives. Functionally, pleiotropic ABC efflux transporter that transports and confers resistance to structurally and functionally unrelated compounds including rhodamine 6G, Nile red, caspofungin, cycloheximide, or azoles such as fluconazole, itraconazole, ketoconazole, posaconazole, voriconazole, and isavuconazole. Chlorbromuron, itraconazole, yohimbine, ketoconazole, miconazole, clotrimazole, DE-11, tamoxifen, quinidine, verapamil can compete for rhodamine 6G's binding site(s) while compounds such as propanil, chloramphenicol, benomyl, voriconazole, tritylimidazole, ketoconazole, miconazole, tamoxifen, gefitinib shared binding site(s) with fluconazole. Nile red mediated efflux appears to be relatively more specific since only five compounds such as ZW3-12, rhodamine 123, miconazole, clotrimazole, and itraconazole can inhibit its accumulation. Does not use as substrates 4-nitroquinoline 1-oxide (4-NQO) and disulfiram. Does not play a role in the azole resistance in mature biofilms. The chain is Pleiotropic ABC efflux transporter of multiple drugs CDR1 from Candida glabrata (strain ATCC 2001 / BCRC 20586 / JCM 3761 / NBRC 0622 / NRRL Y-65 / CBS 138) (Yeast).